Here is a 144-residue protein sequence, read N- to C-terminus: Protein BUD31 homolog (144 aa).

The Nuclear localization signal motif lies at 2-10 (PKVRRSRKP).

The protein belongs to the BUD31 (G10) family.

It localises to the nucleus. The protein is Protein BUD31 homolog of Branchiostoma belcheri (Amphioxus).